The sequence spans 259 residues: Electron transfer flavoprotein subunit beta (259 aa).

It belongs to the ETF beta-subunit/FixA family. In terms of assembly, heterodimer of an alpha and a beta subunit. The cofactor is FAD. AMP serves as cofactor.

Its function is as follows. The electron transfer flavoprotein serves as a specific electron acceptor for other dehydrogenases. It transfers the electrons to the main respiratory chain via ETF-ubiquinone oxidoreductase (ETF dehydrogenase). The sequence is that of Electron transfer flavoprotein subunit beta (etfB) from Clostridium acetobutylicum (strain ATCC 824 / DSM 792 / JCM 1419 / IAM 19013 / LMG 5710 / NBRC 13948 / NRRL B-527 / VKM B-1787 / 2291 / W).